The following is a 91-amino-acid chain: Probable Fe(2+)-trafficking protein (91 aa).

The protein belongs to the Fe(2+)-trafficking protein family. In terms of assembly, monomer.

Its function is as follows. Could be a mediator in iron transactions between iron acquisition and iron-requiring processes, such as synthesis and/or repair of Fe-S clusters in biosynthetic enzymes. The sequence is that of Probable Fe(2+)-trafficking protein from Klebsiella pneumoniae subsp. pneumoniae (strain ATCC 700721 / MGH 78578).